We begin with the raw amino-acid sequence, 185 residues long: DNA-directed RNA polymerase 22 kDa subunit (185 aa).

This sequence belongs to the poxviridae DNA-directed RNA polymerase 22 kDa subunit family. The DNA-dependent RNA polymerase used for intermediate and late genes expression consists of eight subunits Rpo30/OPG66, Rpo7/OPG90, Rpo22/OPG103, Rpo147/OPG105, Rpo18/OPG119, Rpo19/OPG131, Rpo132/OPG151 and Rpo35/OPG156. The same holoenzyme, with the addition of the transcription-specificity factor OPG109, is used for early gene expression.

It is found in the virion. The catalysed reaction is RNA(n) + a ribonucleoside 5'-triphosphate = RNA(n+1) + diphosphate. In terms of biological role, part of the DNA-dependent RNA polymerase which catalyzes the transcription of viral DNA into RNA using the four ribonucleoside triphosphates as substrates. Responsible for the transcription of early, intermediate and late genes. DNA-dependent RNA polymerase associates with the early transcription factor (ETF), itself composed of OPG118 and OPG133, thereby allowing the early genes transcription. Late transcription, and probably also intermediate transcription, require newly synthesized RNA polymerase. In Cynomys gunnisoni (Gunnison's prairie dog), this protein is DNA-directed RNA polymerase 22 kDa subunit (OPG103).